Here is a 163-residue protein sequence, read N- to C-terminus: NADH-quinone oxidoreductase subunit I (163 aa).

2 4Fe-4S ferredoxin-type domains span residues 54–84 and 94–123; these read LRRY…IESD and TRYD…ETHI. Residues cysteine 64, cysteine 67, cysteine 70, cysteine 74, cysteine 103, cysteine 106, cysteine 109, and cysteine 113 each contribute to the [4Fe-4S] cluster site.

This sequence belongs to the complex I 23 kDa subunit family. NDH-1 is composed of 14 different subunits. Subunits NuoA, H, J, K, L, M, N constitute the membrane sector of the complex. [4Fe-4S] cluster is required as a cofactor.

The protein resides in the cell inner membrane. It catalyses the reaction a quinone + NADH + 5 H(+)(in) = a quinol + NAD(+) + 4 H(+)(out). NDH-1 shuttles electrons from NADH, via FMN and iron-sulfur (Fe-S) centers, to quinones in the respiratory chain. The immediate electron acceptor for the enzyme in this species is believed to be ubiquinone. Couples the redox reaction to proton translocation (for every two electrons transferred, four hydrogen ions are translocated across the cytoplasmic membrane), and thus conserves the redox energy in a proton gradient. The protein is NADH-quinone oxidoreductase subunit I of Ralstonia nicotianae (strain ATCC BAA-1114 / GMI1000) (Ralstonia solanacearum).